Here is a 393-residue protein sequence, read N- to C-terminus: MTNSNRIKLTWISFLSYALTGALVIVTGMVMGNIADYFHLPVSNMSNTFTFLNAGILISIFLNAWLMEIVPLKTQLRFGFILMILAVAGLMLSHSLALFSAAMFVLGLVSGITMSIGTFLITQLYEGRQRGSRLLFTDSFFSMAGMVFPMVAAFLLARSIEWYWVYACIGLVYLAIFILTFGCEFPALGKHAQHSQAPAAKEKWGIGVLFLAVAALCYILGQLGFISWVPEYAKGLGMSLNDAGALVSDFWMSYMFGMWAFSFILRFFDLQRILTVLAGMATVLMYLFITGTQAHMPWFILTLGFFSSAIYTSIITLGSQQTKVASPKLVNFILTCGTIGTMLTFVVTGPIVAYSGPQAALLTANGLYAVVFVMCFALGFVSRHRQHSASAAH.

Helical transmembrane passes span 11–31 (WISF…GMVM), 51–71 (FLNA…EIVP), 78–98 (FGFI…SLAL), 101–121 (AAMF…TFLI), 134–154 (LLFT…VAAF), 162–182 (WYWV…LTFG), 206–226 (IGVL…LGFI), 245–265 (ALVS…SFIL), 273–293 (ILTV…TGTQ), 298–318 (WFIL…ITLG), 332–352 (FILT…GPIV), and 361–381 (LLTA…LGFV).

The protein belongs to the major facilitator superfamily. TsgA family.

Its subcellular location is the cell inner membrane. This is Protein TsgA from Salmonella arizonae (strain ATCC BAA-731 / CDC346-86 / RSK2980).